Here is a 148-residue protein sequence, read N- to C-terminus: Ribosomal RNA large subunit methyltransferase H 2 (148 aa).

S-adenosyl-L-methionine-binding positions include L74, G106, and 125 to 130 (FSKMTF).

It belongs to the RNA methyltransferase RlmH family. In terms of assembly, homodimer.

Its subcellular location is the cytoplasm. The catalysed reaction is pseudouridine(1915) in 23S rRNA + S-adenosyl-L-methionine = N(3)-methylpseudouridine(1915) in 23S rRNA + S-adenosyl-L-homocysteine + H(+). Functionally, specifically methylates the pseudouridine at position 1915 (m3Psi1915) in 23S rRNA. This chain is Ribosomal RNA large subunit methyltransferase H 2, found in Caldanaerobacter subterraneus subsp. tengcongensis (strain DSM 15242 / JCM 11007 / NBRC 100824 / MB4) (Thermoanaerobacter tengcongensis).